Consider the following 496-residue polypeptide: Chaperone SurA (496 aa).

Residues Met-1–Ala-42 form the signal peptide. The segment at Arg-53–Gly-80 is disordered. PpiC domains lie at Val-235–Asp-337 and Val-349–Gly-447.

Its subcellular location is the periplasm. It catalyses the reaction [protein]-peptidylproline (omega=180) = [protein]-peptidylproline (omega=0). Its function is as follows. Chaperone involved in the correct folding and assembly of outer membrane proteins. Recognizes specific patterns of aromatic residues and the orientation of their side chains, which are found more frequently in integral outer membrane proteins. May act in both early periplasmic and late outer membrane-associated steps of protein maturation. The sequence is that of Chaperone SurA from Ralstonia nicotianae (strain ATCC BAA-1114 / GMI1000) (Ralstonia solanacearum).